Here is a 699-residue protein sequence, read N- to C-terminus: Transketolase (699 aa).

His45 contacts substrate. Thiamine diphosphate is bound by residues Thr48, His85, and 133–135; that span reads GPL. Asp177 provides a ligand contact to Mg(2+). Thiamine diphosphate contacts are provided by Gly178 and Asn207. Mg(2+) is bound by residues Asn207 and Ile209. Residues His283, Arg378, and Ser405 each coordinate substrate. Position 283 (His283) interacts with thiamine diphosphate. Glu441 acts as the Proton donor in catalysis. Residue Phe467 coordinates thiamine diphosphate. Residues His491, Asp499, and Arg552 each coordinate substrate.

It belongs to the transketolase family. As to quaternary structure, homodimer. Mg(2+) is required as a cofactor. The cofactor is Ca(2+). Mn(2+) serves as cofactor. It depends on Co(2+) as a cofactor. Requires thiamine diphosphate as cofactor.

It catalyses the reaction D-sedoheptulose 7-phosphate + D-glyceraldehyde 3-phosphate = aldehydo-D-ribose 5-phosphate + D-xylulose 5-phosphate. In terms of biological role, catalyzes the transfer of a two-carbon ketol group from a ketose donor to an aldose acceptor, via a covalent intermediate with the cofactor thiamine pyrophosphate. This Mycobacterium leprae (strain TN) protein is Transketolase (tkt).